The primary structure comprises 379 residues: Chaperone protein DnaJ (379 aa).

The region spanning 5 to 70 (DYYEVLGVGK…EKKAAYDQYG (66 aa)) is the J domain. A CR-type zinc finger spans residues 139–217 (GHEAQIRVPH…CHGQGKLKSQ (79 aa)). Cys152, Cys155, Cys169, Cys172, Cys191, Cys194, Cys205, and Cys208 together coordinate Zn(2+). 4 CXXCXGXG motif repeats span residues 152–159 (CDHCHGNG), 169–176 (CPTCHGAG), 191–198 (CPKCHGSG), and 205–212 (CTKCHGQG). The tract at residues 356 to 379 (VHEGGSRHSPQEQSWLDKVKSFFS) is disordered.

The protein belongs to the DnaJ family. In terms of assembly, homodimer. Requires Zn(2+) as cofactor.

The protein resides in the cytoplasm. Participates actively in the response to hyperosmotic and heat shock by preventing the aggregation of stress-denatured proteins and by disaggregating proteins, also in an autonomous, DnaK-independent fashion. Unfolded proteins bind initially to DnaJ; upon interaction with the DnaJ-bound protein, DnaK hydrolyzes its bound ATP, resulting in the formation of a stable complex. GrpE releases ADP from DnaK; ATP binding to DnaK triggers the release of the substrate protein, thus completing the reaction cycle. Several rounds of ATP-dependent interactions between DnaJ, DnaK and GrpE are required for fully efficient folding. Also involved, together with DnaK and GrpE, in the DNA replication of plasmids through activation of initiation proteins. In Cupriavidus pinatubonensis (strain JMP 134 / LMG 1197) (Cupriavidus necator (strain JMP 134)), this protein is Chaperone protein DnaJ.